The chain runs to 890 residues: DNA mismatch repair protein MutS (890 aa).

607–614 (GPNMSGKS) serves as a coordination point for ATP. A disordered region spans residues 832–851 (ESQLSFFGTEQSSKKQDKPV).

This sequence belongs to the DNA mismatch repair MutS family.

In terms of biological role, this protein is involved in the repair of mismatches in DNA. It is possible that it carries out the mismatch recognition step. This protein has a weak ATPase activity. The protein is DNA mismatch repair protein MutS of Bacillus cereus (strain 03BB102).